Reading from the N-terminus, the 208-residue chain is N-(5'-phosphoribosyl)anthranilate isomerase (208 aa).

The protein belongs to the TrpF family.

The enzyme catalyses N-(5-phospho-beta-D-ribosyl)anthranilate = 1-(2-carboxyphenylamino)-1-deoxy-D-ribulose 5-phosphate. It participates in amino-acid biosynthesis; L-tryptophan biosynthesis; L-tryptophan from chorismate: step 3/5. The protein is N-(5'-phosphoribosyl)anthranilate isomerase of Natronomonas pharaonis (strain ATCC 35678 / DSM 2160 / CIP 103997 / JCM 8858 / NBRC 14720 / NCIMB 2260 / Gabara) (Halobacterium pharaonis).